The primary structure comprises 241 residues: Uridylate kinase (241 aa).

Residue 14–17 (KLSG) participates in ATP binding. Gly-56 contributes to the UMP binding site. Gly-57 and Arg-61 together coordinate ATP. UMP contacts are provided by residues Asp-77 and 138 to 145 (TGNPFFTT). ATP contacts are provided by Thr-165, Tyr-171, and Asp-174.

This sequence belongs to the UMP kinase family. Homohexamer.

Its subcellular location is the cytoplasm. The enzyme catalyses UMP + ATP = UDP + ADP. It functions in the pathway pyrimidine metabolism; CTP biosynthesis via de novo pathway; UDP from UMP (UMPK route): step 1/1. Inhibited by UTP. Its function is as follows. Catalyzes the reversible phosphorylation of UMP to UDP. The chain is Uridylate kinase from Psychrobacter arcticus (strain DSM 17307 / VKM B-2377 / 273-4).